The following is a 473-amino-acid chain: H(+)/Cl(-) exchange transporter ClcA (473 aa).

Over 1–32 the chain is Cytoplasmic; that stretch reads MKTDNSTFLAQQIVRLRRRDQIRRLMQRDKTP. Residues 33–69 form a helical membrane-spanning segment; sequence LAILFMAAVVGTLTGLVGVAFEKAVSWVQNMRIGALV. Over 70–76 the chain is Periplasmic; sequence QVADHAF. Residues 77-100 traverse the membrane as a helical segment; that stretch reads LLWPLAFILSALLAMVGYFLVRKF. The Selectivity filter part_1 signature appears at 106 to 110; sequence GSGIP. Residue S107 participates in chloride binding. The helical intramembrane region spans 109-116; it reads IPEIEGAL. The Cytoplasmic portion of the chain corresponds to 117–123; that stretch reads EELRPVR. Helical transmembrane passes span 124–141 and 148–166; these read WWRV…TLGA and EGPT…LDVF. The Selectivity filter part_2 signature appears at 146–150; that stretch reads GREGP. The Cytoplasmic segment spans residues 167 to 176; it reads RMRSAEARHT. 2 consecutive intramembrane regions (helical) follow at residues 177 to 189 and 193 to 201; these read LLAT…LSAA and PLAGILFII. The Cytoplasmic segment spans residues 202 to 214; it reads EEMRPQFRYNLIS. Residues 215-232 form a helical membrane-spanning segment; sequence IKAVFTGVIMSSIVFRIF. The Periplasmic segment spans residues 233 to 252; that stretch reads NGEAPIIEVGKLSDAPVNTL. Residues 253-281 traverse the membrane as a helical segment; the sequence is WLYLILGIIFGCVGPVFNSLVLRTQDMFQ. The Cytoplasmic segment spans residues 282 to 287; the sequence is RFHGGE. A helical membrane pass occupies residues 288-309; that stretch reads IKKWVLMGGAIGGLCGILGLIE. The Periplasmic portion of the chain corresponds to 310–329; it reads PEAAGGGFNLIPIAAAGNFS. 2 helical membrane-spanning segments follow: residues 330 to 349 and 355 to 376; these read VGLL…LCFS and GIFA…MAAA. A Selectivity filter part_3 motif is present at residues 355-359; it reads GIFAP. Chloride is bound by residues I356 and F357. The Periplasmic segment spans residues 377-386; the sequence is VLFPQYHLEA. An intramembrane region (helical) is located at residues 387 to 401; it reads GTFAIAGMGALMAAS. Positions 402 to 404 form an intramembrane region, note=Loop between two helices; the sequence is VRA. An intramembrane region (helical) is located at residues 405–416; sequence PLTGIVLVLEMT. Residues 417–421 constitute an intramembrane region (note=Loop between two helices); sequence DNYQL. A helical transmembrane segment spans residues 422-438; it reads ILPMIITCLGATLLAQF. The Cytoplasmic segment spans residues 439–473; the sequence is LGGKPLYSTILARTLAKQDAEQAAKNQNAPAGENT. A chloride-binding site is contributed by Y445.

This sequence belongs to the chloride channel (TC 2.A.49) family. ClcA subfamily. Homodimer.

It is found in the cell inner membrane. The catalysed reaction is 2 chloride(in) + H(+)(out) = 2 chloride(out) + H(+)(in). Functionally, proton-coupled chloride transporter. Functions as antiport system and exchanges two chloride ions for 1 proton. Probably acts as an electrical shunt for an outwardly-directed proton pump that is linked to amino acid decarboxylation, as part of the extreme acid resistance (XAR) response. This Salmonella schwarzengrund (strain CVM19633) protein is H(+)/Cl(-) exchange transporter ClcA.